Reading from the N-terminus, the 37-residue chain is Large ribosomal subunit protein bL36c (37 aa).

Belongs to the bacterial ribosomal protein bL36 family.

Its subcellular location is the plastid. The protein resides in the chloroplast. This is Large ribosomal subunit protein bL36c (rpl36) from Marchantia polymorpha (Common liverwort).